The primary structure comprises 569 residues: Proline--tRNA ligase (569 aa).

This sequence belongs to the class-II aminoacyl-tRNA synthetase family. ProS type 1 subfamily. As to quaternary structure, homodimer.

It is found in the cytoplasm. It carries out the reaction tRNA(Pro) + L-proline + ATP = L-prolyl-tRNA(Pro) + AMP + diphosphate. Catalyzes the attachment of proline to tRNA(Pro) in a two-step reaction: proline is first activated by ATP to form Pro-AMP and then transferred to the acceptor end of tRNA(Pro). As ProRS can inadvertently accommodate and process non-cognate amino acids such as alanine and cysteine, to avoid such errors it has two additional distinct editing activities against alanine. One activity is designated as 'pretransfer' editing and involves the tRNA(Pro)-independent hydrolysis of activated Ala-AMP. The other activity is designated 'posttransfer' editing and involves deacylation of mischarged Ala-tRNA(Pro). The misacylated Cys-tRNA(Pro) is not edited by ProRS. This chain is Proline--tRNA ligase, found in Legionella pneumophila (strain Corby).